Here is a 193-residue protein sequence, read N- to C-terminus: Ion-translocating oxidoreductase complex subunit A (193 aa).

6 helical membrane passes run 5-25 (FFFI…FLGL), 47-67 (FVVV…LLPF), 72-92 (LRII…EIIL), 102-122 (ILGI…IPLF), 134-154 (ILYA…FSSI), and 171-191 (PIVL…KGLV).

Belongs to the NqrDE/RnfAE family. As to quaternary structure, the complex is composed of six subunits: RnfA, RnfB, RnfC, RnfD, RnfE and RnfG.

The protein localises to the cell inner membrane. In terms of biological role, part of a membrane-bound complex that couples electron transfer with translocation of ions across the membrane. The chain is Ion-translocating oxidoreductase complex subunit A from Buchnera aphidicola subsp. Schizaphis graminum (strain Sg).